Here is a 283-residue protein sequence, read N- to C-terminus: 2,3,4,5-tetrahydropyridine-2,6-dicarboxylate N-succinyltransferase (283 aa).

Substrate contacts are provided by Arg-107 and Asp-144.

It belongs to the transferase hexapeptide repeat family. Homotrimer.

It is found in the cytoplasm. The enzyme catalyses (S)-2,3,4,5-tetrahydrodipicolinate + succinyl-CoA + H2O = (S)-2-succinylamino-6-oxoheptanedioate + CoA. It functions in the pathway amino-acid biosynthesis; L-lysine biosynthesis via DAP pathway; LL-2,6-diaminopimelate from (S)-tetrahydrodipicolinate (succinylase route): step 1/3. This is 2,3,4,5-tetrahydropyridine-2,6-dicarboxylate N-succinyltransferase from Rhodospirillum rubrum (strain ATCC 11170 / ATH 1.1.1 / DSM 467 / LMG 4362 / NCIMB 8255 / S1).